The chain runs to 312 residues: Aspartate carbamoyltransferase catalytic subunit (312 aa).

Positions 57 and 58 each coordinate carbamoyl phosphate. Residue Lys-85 coordinates L-aspartate. Carbamoyl phosphate-binding residues include Arg-107, His-135, and Gln-138. L-aspartate contacts are provided by Arg-168 and Arg-222. Residues Gly-264 and Pro-265 each contribute to the carbamoyl phosphate site.

It belongs to the aspartate/ornithine carbamoyltransferase superfamily. ATCase family. In terms of assembly, heterododecamer (2C3:3R2) of six catalytic PyrB chains organized as two trimers (C3), and six regulatory PyrI chains organized as three dimers (R2).

The enzyme catalyses carbamoyl phosphate + L-aspartate = N-carbamoyl-L-aspartate + phosphate + H(+). Its pathway is pyrimidine metabolism; UMP biosynthesis via de novo pathway; (S)-dihydroorotate from bicarbonate: step 2/3. Its function is as follows. Catalyzes the condensation of carbamoyl phosphate and aspartate to form carbamoyl aspartate and inorganic phosphate, the committed step in the de novo pyrimidine nucleotide biosynthesis pathway. The chain is Aspartate carbamoyltransferase catalytic subunit from Carboxydothermus hydrogenoformans (strain ATCC BAA-161 / DSM 6008 / Z-2901).